The primary structure comprises 436 residues: Nucleolar protein 4-like (436 aa).

The interval 1-184 (MSDSTWMSAD…KMNDSEGMDP (184 aa)) is disordered. The segment covering 41–61 (SESGSGNGSSTLNPSTSSSTQ) has biased composition (low complexity). Ser-130 carries the phosphoserine modification. Positions 160 to 169 (ADDDDDDHDD) are enriched in acidic residues. The span at 170–184 (HEDNDKMNDSEGMDP) shows a compositional bias: basic and acidic residues. At Ser-295 the chain carries Phosphoserine. A compositionally biased stretch (polar residues) spans 351–366 (QPPASLQTGNHSNGPT). The interval 351-400 (QPPASLQTGNHSNGPTDLSMKGGASTTSTTPTPTPSSTSTSRPVPTAQLS) is disordered. Positions 375-396 (STTSTTPTPTPSSTSTSRPVPT) are enriched in low complexity.

This is Nucleolar protein 4-like (NOL4L) from Homo sapiens (Human).